A 347-amino-acid polypeptide reads, in one-letter code: NADH-ubiquinone oxidoreductase chain 2 (347 aa).

10 helical membrane passes run 3–23 (PPIL…VMLS), 25–45 (HWLL…PILM), 66–86 (ASML…QWVI), 93–115 (IASI…HFWV), 149–169 (INTN…GWGG), 178–198 (IMAY…TYNP), 201–221 (MILN…LFML), 237–257 (FPLI…LPPL), 274–294 (NMII…YFYL), and 325–345 (LLPP…MLSV).

Belongs to the complex I subunit 2 family. In terms of assembly, core subunit of respiratory chain NADH dehydrogenase (Complex I) which is composed of 45 different subunits. Interacts with TMEM242.

The protein localises to the mitochondrion inner membrane. The enzyme catalyses a ubiquinone + NADH + 5 H(+)(in) = a ubiquinol + NAD(+) + 4 H(+)(out). Functionally, core subunit of the mitochondrial membrane respiratory chain NADH dehydrogenase (Complex I) which catalyzes electron transfer from NADH through the respiratory chain, using ubiquinone as an electron acceptor. Essential for the catalytic activity and assembly of complex I. The polypeptide is NADH-ubiquinone oxidoreductase chain 2 (Canis lupus (Gray wolf)).